The primary structure comprises 202 residues: MTAIAIHPESLRDVVASALGDRVRQISVALDEVTVVVSAARYLEAMQILRDAPDCKFEQLIDLCGVDYSAYGATGSEGPRYAVVSHLLSVSLNQRLRVKVFCSDDDFPIVASVTDIWNSANWFEREAFDLFGIVFDGHNDLRRILTDYGFIGHPFRKDFPLSGHVEMRYDADQRRVIYEPVTIEPREVTPRVIREDKYGGLH.

This sequence belongs to the complex I 30 kDa subunit family. In terms of assembly, NDH-1 is composed of 14 different subunits. Subunits NuoB, C, D, E, F, and G constitute the peripheral sector of the complex.

The protein localises to the cell inner membrane. It catalyses the reaction a quinone + NADH + 5 H(+)(in) = a quinol + NAD(+) + 4 H(+)(out). NDH-1 shuttles electrons from NADH, via FMN and iron-sulfur (Fe-S) centers, to quinones in the respiratory chain. The immediate electron acceptor for the enzyme in this species is believed to be ubiquinone. Couples the redox reaction to proton translocation (for every two electrons transferred, four hydrogen ions are translocated across the cytoplasmic membrane), and thus conserves the redox energy in a proton gradient. This Acidovorax sp. (strain JS42) protein is NADH-quinone oxidoreductase subunit C.